Reading from the N-terminus, the 218-residue chain is NAD(P)H-quinone oxidoreductase subunit I (218 aa).

4Fe-4S ferredoxin-type domains follow at residues 55–84 and 95–124; these read GRIH…VDWV and RNYS…MTEE. The [4Fe-4S] cluster site is built by Cys64, Cys67, Cys70, Cys74, Cys104, Cys107, Cys110, and Cys114. Residues 169-218 are disordered; the sequence is MDPHDVPANQPRAGQLPAEALKSLSLQQESVQGDEGESLQDASDQDQPSG. The segment covering 208 to 218 has biased composition (polar residues); that stretch reads QDASDQDQPSG.

This sequence belongs to the complex I 23 kDa subunit family. In terms of assembly, NDH-1 is composed of at least 11 different subunits. [4Fe-4S] cluster is required as a cofactor.

It is found in the cellular thylakoid membrane. It carries out the reaction a plastoquinone + NADH + (n+1) H(+)(in) = a plastoquinol + NAD(+) + n H(+)(out). It catalyses the reaction a plastoquinone + NADPH + (n+1) H(+)(in) = a plastoquinol + NADP(+) + n H(+)(out). In terms of biological role, NDH-1 shuttles electrons from an unknown electron donor, via FMN and iron-sulfur (Fe-S) centers, to quinones in the respiratory and/or the photosynthetic chain. The immediate electron acceptor for the enzyme in this species is believed to be plastoquinone. Couples the redox reaction to proton translocation, and thus conserves the redox energy in a proton gradient. This chain is NAD(P)H-quinone oxidoreductase subunit I, found in Prochlorococcus marinus (strain MIT 9313).